Reading from the N-terminus, the 280-residue chain is MKRVGAHVSTAGGVENAPLQATSIGAKAFALFTKNQRQWKAPKLTTSSIEAFKKNCEAGGFRPEHILPHDSYLINLGSPDPEKLQRAREAFIEEMQRAEELGLLLLNFHPGSHLKEIAEERCLELIAESINRALDATKTVTAVIENTAGQGTNLGNRFEQLAFLVDRIEDKTRVGVCLDTCHLFASGYDLQTTAAIESTFMEFDRIVGLRYLRGMHLNDAMQPLGSRIDRHAGIGKGTIGMDAFRWIMNNPACEEIPLILETPDSAAWSEEISLLYALEQ.

His69, His109, Glu145, Asp179, His182, His216, Asp229, His231, and Glu261 together coordinate Zn(2+).

Belongs to the AP endonuclease 2 family. The cofactor is Zn(2+).

It catalyses the reaction Endonucleolytic cleavage to 5'-phosphooligonucleotide end-products.. In terms of biological role, endonuclease IV plays a role in DNA repair. It cleaves phosphodiester bonds at apurinic or apyrimidinic (AP) sites, generating a 3'-hydroxyl group and a 5'-terminal sugar phosphate. The chain is Probable endonuclease 4 from Pelodictyon phaeoclathratiforme (strain DSM 5477 / BU-1).